Here is a 570-residue protein sequence, read N- to C-terminus: GDP-Man:Man(3)GlcNAc(2)-PP-Dol alpha-1,2-mannosyltransferase (570 aa).

At 1–7 (MKLADFV) the chain is on the lumenal side. Residues 8–70 (TYVFGSLLAG…DFGWKNSSVR (63 aa)) traverse the membrane as a helical segment. Over 71–200 (RAFILASERP…RLVESKSWPK (130 aa)) the chain is Cytoplasmic. Positions 201–221 (FTLLGQAYGSIILSIEALTTL) form an intramembrane region, helical. The Cytoplasmic segment spans residues 222–446 (APDYWIDTMG…FGINAMWNEH (225 aa)). The segment at residues 447–467 (FGIAVVEYMASGLIPLCHASA) is an intramembrane region (helical). Residues 468-570 (GPLYDIVVPW…LNLTHNRMFS (103 aa)) are Cytoplasmic-facing.

Belongs to the glycosyltransferase group 1 family.

It is found in the endoplasmic reticulum membrane. It carries out the reaction an alpha-D-Man-(1-&gt;3)-[alpha-D-Man-(1-&gt;6)]-beta-D-Man-(1-&gt;4)-beta-D-GlcNAc-(1-&gt;4)-alpha-D-GlcNAc-diphospho-di-trans,poly-cis-dolichol + 2 GDP-alpha-D-mannose = an alpha-D-Man-(1-&gt;2)-alpha-D-Man-(1-&gt;2)-alpha-D-Man-(1-&gt;3)-[alpha-D-Man-(1-&gt;6)]-beta-D-Man-(1-&gt;4)-beta-D-GlcNAc-(1-&gt;4)-alpha-D-GlcNAc-diphospho-di-trans,poly-cis-dolichol + 2 GDP + 2 H(+). It participates in protein modification; protein glycosylation. Functionally, GDP-Man:Man(3)GlcNAc(2)-PP-Dol alpha-1,2-mannosyltransferase that operates in the biosynthetic pathway of dolichol-linked oligosaccharides, the glycan precursors employed in protein asparagine (N)-glycosylation. The assembly of dolichol-linked oligosaccharides begins on the cytosolic side of the endoplasmic reticulum membrane and finishes in its lumen. The sequential addition of sugars to dolichol pyrophosphate produces dolichol-linked oligosaccharides containing fourteen sugars, including two GlcNAcs, nine mannoses and three glucoses. Once assembled, the oligosaccharide is transferred from the lipid to nascent proteins by oligosaccharyltransferases. Catalyzes, on the cytoplasmic face of the endoplasmic reticulum, the addition of the fourth and fifth mannose residues to the dolichol-linked oligosaccharide chain, to produce Man(5)GlcNAc(2)-PP-dolichol core oligosaccharide. The sequence is that of GDP-Man:Man(3)GlcNAc(2)-PP-Dol alpha-1,2-mannosyltransferase (ALG11) from Kluyveromyces lactis (strain ATCC 8585 / CBS 2359 / DSM 70799 / NBRC 1267 / NRRL Y-1140 / WM37) (Yeast).